The sequence spans 178 residues: Large ribosomal subunit protein uL6 (178 aa).

It belongs to the universal ribosomal protein uL6 family. Part of the 50S ribosomal subunit.

Functionally, this protein binds to the 23S rRNA, and is important in its secondary structure. It is located near the subunit interface in the base of the L7/L12 stalk, and near the tRNA binding site of the peptidyltransferase center. This is Large ribosomal subunit protein uL6 from Corynebacterium glutamicum (strain R).